The sequence spans 280 residues: uncharacterized protein (280 aa).

4 consecutive CBS domains span residues 10–67 (QNKK…GSKY), 90–146 (MEEN…KIDE), 154–209 (ITRD…DWAF), and 229–280 (MKRD…KYFA).

This is an uncharacterized protein from Methanocaldococcus jannaschii (strain ATCC 43067 / DSM 2661 / JAL-1 / JCM 10045 / NBRC 100440) (Methanococcus jannaschii).